The sequence spans 285 residues: Urease accessory protein UreD (285 aa).

The protein belongs to the UreD family. UreD, UreF and UreG form a complex that acts as a GTP-hydrolysis-dependent molecular chaperone, activating the urease apoprotein by helping to assemble the nickel containing metallocenter of UreC. The UreE protein probably delivers the nickel.

The protein localises to the cytoplasm. In terms of biological role, required for maturation of urease via the functional incorporation of the urease nickel metallocenter. This Cytophaga hutchinsonii (strain ATCC 33406 / DSM 1761 / CIP 103989 / NBRC 15051 / NCIMB 9469 / D465) protein is Urease accessory protein UreD.